The chain runs to 184 residues: Ras-related protein Rap-1b (184 aa).

Glycine 10–alanine 18 contacts GTP. The tract at residues glutamine 25 to methionine 67 is interaction with KRIT1. The short motif at tyrosine 32–tyrosine 40 is the Effector region element. GTP is bound by residues aspartate 57 to threonine 61, asparagine 116 to aspartate 119, and serine 147 to lysine 149. Serine 179 carries the post-translational modification Phosphoserine; by PKA. Cysteine 181 carries the post-translational modification Cysteine methyl ester. Cysteine 181 is lipidated: S-geranylgeranyl cysteine. The propeptide at glutamine 182–leucine 184 is removed in mature form.

As to quaternary structure, heterodimer with RAP1GAP. Interacts with EPAC2. Interacts with SGSM1. Interacts with SGSM2. Interacts with SGSM3. Interacts with KRIT1. Interacts with RAP1GDS1.

Its subcellular location is the cell membrane. It is found in the cytoplasm. The protein localises to the cytosol. It localises to the cell junction. The enzyme catalyses GTP + H2O = GDP + phosphate + H(+). With respect to regulation, activated by guanine nucleotide-exchange factor (GEF) EPAC2 in a cAMP-dependent manner. In terms of biological role, GTP-binding protein that possesses intrinsic GTPase activity. Contributes to the polarizing activity of KRIT1 and CDH5 in the establishment and maintenance of correct endothelial cell polarity and vascular lumen. Required for the localization of phosphorylated PRKCZ, PARD3 and TIAM1 to the cell junction. Plays a role in the establishment of basal endothelial barrier function. This chain is Ras-related protein Rap-1b (RAP1B), found in Bos taurus (Bovine).